Reading from the N-terminus, the 81-residue chain is MAAVAAASAELLIIGWYIFRVLLQVFLECCIYWVGFAFRNPPGTQPIARSEVFRYSLQKLAYTVSRTGRQVLGERRQRAPN.

The protein belongs to the neuronatin family.

Functionally, may participate in the maintenance of segment identity in the hindbrain and pituitary development, and maturation or maintenance of the overall structure of the nervous system. May function as a regulatory subunit of ion channels. The sequence is that of Neuronatin (NNAT) from Homo sapiens (Human).